We begin with the raw amino-acid sequence, 495 residues long: uncharacterized protein (495 aa).

Residues 305-317 show a composition bias toward low complexity; the sequence is DYNNNNNENYSGS. Residues 305 to 404 form a disordered region; the sequence is DYNNNNNENY…LDEEDNRKNK (100 aa). Positions 335 to 347 are enriched in acidic residues; the sequence is YDNDENNDDENND. Residues 348–363 show a composition bias toward low complexity; that stretch reads ENNNNNNNNNNNNNNN. Residues 386-398 are compositionally biased toward acidic residues; that stretch reads SDDDEADNELDEE.

This is an uncharacterized protein from Dictyostelium discoideum (Social amoeba).